The sequence spans 212 residues: MPAERPSVSQKPKNPYKRPDAFTKAAKAQGYPARSVFKLEEIDRRVRLLRPGQRVLDLGAAPGSWSMYAAQRIGAGGKLLAVDLSPITAAFGPQATVVQGDALSLTNEALAQFAPYDVVLSDMAPATSGSKIADQARSYELFMRAVAVAEALLAPGGAFVGKIFMSEDFVKARDALRNLCEEVRSIRPEGTRASSVEIFLVGLKRKAAGKTG.

The interval 1–26 (MPAERPSVSQKPKNPYKRPDAFTKAA) is disordered. Residues Gly-63, Trp-65, Asp-83, Asp-101, and Asp-122 each coordinate S-adenosyl-L-methionine. Lys-162 functions as the Proton acceptor in the catalytic mechanism.

This sequence belongs to the class I-like SAM-binding methyltransferase superfamily. RNA methyltransferase RlmE family.

It is found in the cytoplasm. The enzyme catalyses uridine(2552) in 23S rRNA + S-adenosyl-L-methionine = 2'-O-methyluridine(2552) in 23S rRNA + S-adenosyl-L-homocysteine + H(+). In terms of biological role, specifically methylates the uridine in position 2552 of 23S rRNA at the 2'-O position of the ribose in the fully assembled 50S ribosomal subunit. This Sorangium cellulosum (strain So ce56) (Polyangium cellulosum (strain So ce56)) protein is Ribosomal RNA large subunit methyltransferase E.